Consider the following 728-residue polypeptide: Catalase-peroxidase 1 (728 aa).

Residues 91 to 218 constitute a cross-link (tryptophyl-tyrosyl-methioninium (Trp-Tyr) (with M-244)); that stretch reads WHGAGTYRIA…LAAVQMGLIY (128 aa). His-92 serves as the catalytic Proton acceptor. Residues 218–244 constitute a cross-link (tryptophyl-tyrosyl-methioninium (Tyr-Met) (with W-91)); it reads YVNPEGPDGKPDPVAAARDIRDTFARM. His-259 contributes to the heme b binding site.

This sequence belongs to the peroxidase family. Peroxidase/catalase subfamily. Homodimer or homotetramer. It depends on heme b as a cofactor. Formation of the three residue Trp-Tyr-Met cross-link is important for the catalase, but not the peroxidase activity of the enzyme.

It catalyses the reaction H2O2 + AH2 = A + 2 H2O. It carries out the reaction 2 H2O2 = O2 + 2 H2O. Its function is as follows. Bifunctional enzyme with both catalase and broad-spectrum peroxidase activity. This chain is Catalase-peroxidase 1, found in Burkholderia vietnamiensis (strain G4 / LMG 22486) (Burkholderia cepacia (strain R1808)).